Here is a 151-residue protein sequence, read N- to C-terminus: Actin-depolymerizing factor 10 (151 aa).

Positions Pro-15–Asn-149 constitute an ADF-H domain.

Belongs to the actin-binding proteins ADF family.

Functionally, actin-depolymerizing protein. Severs actin filaments (F-actin) and binds to actin monomers. The sequence is that of Actin-depolymerizing factor 10 (ADF10) from Oryza sativa subsp. japonica (Rice).